Consider the following 437-residue polypeptide: Minor fimbrial subunit HifE (437 aa).

Positions 1 to 30 (MNKKSYINHYLTLFKVTTLLFTLSSNPVWA) are cleaved as a signal peptide.

The protein belongs to the fimbrial protein family.

The protein localises to the fimbrium. May be a minor structural protein required for pilus biogenesis. May be the adhesive component in the pili. The polypeptide is Minor fimbrial subunit HifE (hifE) (Haemophilus influenzae).